A 94-amino-acid chain; its full sequence is Small ribosomal subunit protein uS19 (94 aa).

It belongs to the universal ribosomal protein uS19 family.

Functionally, protein S19 forms a complex with S13 that binds strongly to the 16S ribosomal RNA. This Pelotomaculum thermopropionicum (strain DSM 13744 / JCM 10971 / SI) protein is Small ribosomal subunit protein uS19.